The chain runs to 44 residues: Large ribosomal subunit protein P2 (44 aa).

The residue at position 1 (M1) is an N-acetylmethionine. 2 positions are modified to phosphoserine: S17 and S19. The residue at position 21 (K21) is an N6-acetyllysine; alternate. Position 21 is an N6-succinyllysine; alternate (K21).

The protein belongs to the eukaryotic ribosomal protein P1/P2 family. In terms of assembly, heterodimer with RPLP1 at the lateral ribosomal stalk of the large ribosomal subunit. Phosphorylated.

Functionally, plays an important role in the elongation step of protein synthesis. The protein is Large ribosomal subunit protein P2 (RPLP2) of Oryctolagus cuniculus (Rabbit).